Reading from the N-terminus, the 158-residue chain is Snaclec mucrocetin subunit alpha (158 aa).

The signal sequence occupies residues 1 to 23; that stretch reads MGRFIFVSFGLLVVFLSLSGTGA. 3 cysteine pairs are disulfide-bonded: C27–C38, C55–C152, and C127–C144. The region spanning 34–153 is the C-type lectin domain; that stretch reads YDRYCYQAFS…CGRENPFVCK (120 aa).

The protein belongs to the snaclec family. As to quaternary structure, tetramer of heterodimers of alpha and beta subunits (alphabeta)(4); disulfide-linked. Expressed by the venom gland.

It localises to the secreted. Its function is as follows. Platelet-agglutinating factor that acts in a vWF-independent manner. Binds specifically to platelet GPIbalpha (GP1BA) to a distinct binding site from that of flavocetin-A. The polypeptide is Snaclec mucrocetin subunit alpha (Protobothrops mucrosquamatus (Taiwan habu)).